The chain runs to 236 residues: Small ribosomal subunit protein uS2c (236 aa).

The protein belongs to the universal ribosomal protein uS2 family.

The protein resides in the plastid. It localises to the chloroplast. The polypeptide is Small ribosomal subunit protein uS2c (rps2) (Calycanthus floridus var. glaucus (Eastern sweetshrub)).